The following is an 89-amino-acid chain: Small ribosomal subunit protein uS15 (89 aa).

The segment covering 1–21 has biased composition (basic and acidic residues); that stretch reads MALSPEKKNEIIENFKTHEGD. The segment at 1–23 is disordered; the sequence is MALSPEKKNEIIENFKTHEGDTG.

It belongs to the universal ribosomal protein uS15 family. In terms of assembly, part of the 30S ribosomal subunit. Forms a bridge to the 50S subunit in the 70S ribosome, contacting the 23S rRNA.

Functionally, one of the primary rRNA binding proteins, it binds directly to 16S rRNA where it helps nucleate assembly of the platform of the 30S subunit by binding and bridging several RNA helices of the 16S rRNA. Forms an intersubunit bridge (bridge B4) with the 23S rRNA of the 50S subunit in the ribosome. In Desulforamulus reducens (strain ATCC BAA-1160 / DSM 100696 / MI-1) (Desulfotomaculum reducens), this protein is Small ribosomal subunit protein uS15.